The sequence spans 355 residues: Acyl-CoA desaturase 1 (355 aa).

Over 1–68 (MPAHMLQEIS…EGPPPKLEYV (68 aa)) the chain is Cytoplasmic. A compositionally biased stretch (low complexity) spans 9-20 (ISSSYTTTTTIT). The segment at 9 to 33 (ISSSYTTTTTITAPPSGNEREKVKT) is disordered. The chain crosses the membrane as a helical span at residues 69–89 (WRNIILMVLLHLGGLYGIILV). N71 is a substrate binding site. Residues 90-93 (PSCK) are Lumenal-facing. A helical membrane pass occupies residues 94–114 (LYTCLFGIFYYMTSALGITAG). Residues 115-213 (AHRLWSHRTY…EKLVMFQRRY (99 aa)) lie on the Cytoplasmic side of the membrane. H116 and H121 together coordinate Fe cation. The short motif at 116–121 (HRLWSH) is the Histidine box-1 element. Positions 144, 151, and 152 each coordinate substrate. Fe cation-binding residues include H153, H156, and H157. Residues 153–157 (HRAHH) carry the Histidine box-2 motif. Substrate-binding residues include R184 and K185. The chain crosses the membrane as a helical span at residues 214 to 233 (YKPGLLLMCFILPTLVPWYC). The Lumenal portion of the chain corresponds to 234 to 237 (WGET). A helical transmembrane segment spans residues 238-259 (FVNSLFVSTFLRYTLVLNATWL). Residue W258 coordinates substrate. Topologically, residues 260–355 (VNSAAHLYGY…RTGDGSHKSS (96 aa)) are cytoplasmic. The Fe cation site is built by H265, H294, H297, and H298. The short motif at 294 to 298 (HNYHH) is the Histidine box-3 element.

This sequence belongs to the fatty acid desaturase type 1 family. Requires Fe(2+) as cofactor. As to expression, detected in liver (at protein level). Detected in skin and liver. Detected in sebaceous gland, but not in hair follicle. Detected in white and brown adipose tissue, eyelid, Harderian gland, and at lower levels in Meibomian gland, eyeball and adrenal gland. Highly expressed in liver, and detected at low levels in brain, heart, lung, stomach, skeletal muscle and kidney.

It localises to the endoplasmic reticulum membrane. The protein localises to the microsome membrane. The catalysed reaction is octadecanoyl-CoA + 2 Fe(II)-[cytochrome b5] + O2 + 2 H(+) = (9Z)-octadecenoyl-CoA + 2 Fe(III)-[cytochrome b5] + 2 H2O. In terms of biological role, stearoyl-CoA desaturase that utilizes O(2) and electrons from reduced cytochrome b5 to introduce the first double bond into saturated fatty acyl-CoA substrates. Catalyzes the insertion of a cis double bond at the Delta-9 position into fatty acyl-CoA substrates including palmitoyl-CoA and stearoyl-CoA. Gives rise to a mixture of 16:1 and 18:1 unsaturated fatty acids. Plays an important role in lipid biosynthesis. Plays an important role in regulating the expression of genes that are involved in lipogenesis and in regulating mitochondrial fatty acid oxidation. Plays an important role in body energy homeostasis. Contributes to the biosynthesis of membrane phospholipids, cholesterol esters and triglycerides. Required for normal development of sebaceous glands. Required for the biosynthesis of normal levels of Delta-9 unsaturated fatty acids and 1-alkyl-2,3-diacylglycerol in the Harderian gland. Required for normal production of meibum, an oily material that prevents drying of the cornea. This chain is Acyl-CoA desaturase 1 (Scd1), found in Mus musculus (Mouse).